We begin with the raw amino-acid sequence, 984 residues long: Lateral signaling target protein 2 homolog (984 aa).

Disordered regions lie at residues proline 308–glutamate 462, tyrosine 508–serine 527, arginine 539–serine 642, and aspartate 749–alanine 900. Low complexity-rich tracts occupy residues threonine 326 to threonine 356, asparagine 369 to asparagine 380, threonine 387 to alanine 404, and proline 412 to tryptophan 433. A compositionally biased stretch (acidic residues) spans serine 434 to glutamate 462. Phosphoserine is present on residues serine 544 and serine 545. Residues arginine 571 to arginine 611 are compositionally biased toward basic residues. Residues leucine 630–serine 642 show a composition bias toward low complexity. 2 stretches are compositionally biased toward polar residues: residues alanine 760–leucine 779 and serine 789–leucine 806. At serine 805 the chain carries Phosphoserine. 2 stretches are compositionally biased toward low complexity: residues alanine 811 to alanine 869 and proline 886 to proline 899. Residues aspartate 904–valine 964 form an FYVE-type zinc finger. Residues cysteine 910, cysteine 913, cysteine 926, cysteine 929, cysteine 934, cysteine 937, cysteine 956, and cysteine 959 each contribute to the Zn(2+) site.

This sequence belongs to the lst-2 family.

Negative regulator of epidermal growth factor receptor (EGFR) signaling. In Drosophila yakuba (Fruit fly), this protein is Lateral signaling target protein 2 homolog.